The sequence spans 299 residues: Cathepsin B-like CP3 (299 aa).

Positions 1-19 (MKLFLLAAAAFSAPALTVS) are cleaved as a signal peptide. Intrachain disulfides connect Cys-87/Cys-114, Cys-97/Cys-140, and Cys-133/Cys-176. Cys-100 is a catalytic residue. Catalysis depends on residues His-244 and Asn-265.

It belongs to the peptidase C1 family.

The protein localises to the vacuole. Functionally, thiol protease which is required for parasite excystation and invasion of the proximal small intestine of the human host. This is Cathepsin B-like CP3 (CP3) from Giardia intestinalis (Giardia lamblia).